The chain runs to 368 residues: CST complex subunit STN1 (368 aa).

An interaction with CTC1 region spans residues 1 to 185 (MQPGSSRCEE…KVYDQPFHSS (185 aa)). Positions 57–155 (VDVLGTVIGV…EIHATTYYKV (99 aa)) form a DNA-binding region, OB. 2 winged helix-turn-helix (wHTH) regions span residues 191-295 (EALS…YVTR) and 296-368 (EDKD…YTAF).

It belongs to the STN1 family. In terms of assembly, component of the CST complex, composed of TEN1/C17orf106, CTC1/C17orf68 and STN1; in the complex interacts directly with TEN1 and CTC1. Interacts with ACD/TPP1, POT1 and POLA1.

It is found in the nucleus. It localises to the chromosome. The protein localises to the telomere. Functionally, component of the CST complex proposed to act as a specialized replication factor promoting DNA replication under conditions of replication stress or natural replication barriers such as the telomere duplex. The CST complex binds single-stranded DNA with high affinity in a sequence-independent manner, while isolated subunits bind DNA with low affinity by themselves. Initially the CST complex has been proposed to protect telomeres from DNA degradation. However, the CST complex has been shown to be involved in several aspects of telomere replication. The CST complex inhibits telomerase and is involved in telomere length homeostasis; it is proposed to bind to newly telomerase-synthesized 3' overhangs and to terminate telomerase action implicating the association with the ACD:POT1 complex thus interfering with its telomerase stimulation activity. The CST complex is also proposed to be involved in fill-in synthesis of the telomeric C-strand probably implicating recruitment and activation of DNA polymerase alpha. The CST complex facilitates recovery from many forms of exogenous DNA damage; seems to be involved in the re-initiation of DNA replication at repaired forks and/or dormant origins. Required for efficicient replication of the duplex region of the telomere. Promotes efficient replication of lagging-strand telomeres. Promotes general replication start following replication-fork stalling implicating new origin firing. May be in involved in C-strand fill-in during late S/G2 phase independent of its role in telomere duplex replication. Component of the CST complex, a complex that binds to single-stranded DNA and is required to protect telomeres from DNA degradation. The CST complex binds single-stranded DNA with high affinity in a sequence-independent manner, while isolated subunits bind DNA with low affinity by themselves. In addition to telomere protection, the CST complex has probably a more general role in DNA metabolism at non-telomeric sites. This chain is CST complex subunit STN1, found in Homo sapiens (Human).